A 354-amino-acid polypeptide reads, in one-letter code: UDP-N-acetylglucosamine--N-acetylmuramyl-(pentapeptide) pyrophosphoryl-undecaprenol N-acetylglucosamine transferase (354 aa).

UDP-N-acetyl-alpha-D-glucosamine is bound by residues 15–17 (TGG), N127, R163, S191, I244, 263–268 (ALTVSE), and Q288.

The protein belongs to the glycosyltransferase 28 family. MurG subfamily.

It is found in the cell inner membrane. The enzyme catalyses di-trans,octa-cis-undecaprenyl diphospho-N-acetyl-alpha-D-muramoyl-L-alanyl-D-glutamyl-meso-2,6-diaminopimeloyl-D-alanyl-D-alanine + UDP-N-acetyl-alpha-D-glucosamine = di-trans,octa-cis-undecaprenyl diphospho-[N-acetyl-alpha-D-glucosaminyl-(1-&gt;4)]-N-acetyl-alpha-D-muramoyl-L-alanyl-D-glutamyl-meso-2,6-diaminopimeloyl-D-alanyl-D-alanine + UDP + H(+). Its pathway is cell wall biogenesis; peptidoglycan biosynthesis. Cell wall formation. Catalyzes the transfer of a GlcNAc subunit on undecaprenyl-pyrophosphoryl-MurNAc-pentapeptide (lipid intermediate I) to form undecaprenyl-pyrophosphoryl-MurNAc-(pentapeptide)GlcNAc (lipid intermediate II). This is UDP-N-acetylglucosamine--N-acetylmuramyl-(pentapeptide) pyrophosphoryl-undecaprenol N-acetylglucosamine transferase from Vibrio cholerae serotype O1 (strain ATCC 39315 / El Tor Inaba N16961).